The chain runs to 175 residues: NADH-quinone oxidoreductase subunit I (175 aa).

4Fe-4S ferredoxin-type domains follow at residues 64–93 (KRDEQGRENCTACGLCAVSCPAEAITIIAD) and 110–139 (SLYEINMLRCIFCGLCEEACPKDAVYLTEE). 8 residues coordinate [4Fe-4S] cluster: Cys73, Cys76, Cys79, Cys83, Cys119, Cys122, Cys125, and Cys129.

Belongs to the complex I 23 kDa subunit family. In terms of assembly, NDH-1 is composed of 14 different subunits. Subunits NuoA, H, J, K, L, M, N constitute the membrane sector of the complex. Requires [4Fe-4S] cluster as cofactor.

It is found in the cell inner membrane. It catalyses the reaction a quinone + NADH + 5 H(+)(in) = a quinol + NAD(+) + 4 H(+)(out). NDH-1 shuttles electrons from NADH, via FMN and iron-sulfur (Fe-S) centers, to quinones in the respiratory chain. The immediate electron acceptor for the enzyme in this species is believed to be ubiquinone. Couples the redox reaction to proton translocation (for every two electrons transferred, four hydrogen ions are translocated across the cytoplasmic membrane), and thus conserves the redox energy in a proton gradient. The protein is NADH-quinone oxidoreductase subunit I of Cytophaga hutchinsonii (strain ATCC 33406 / DSM 1761 / CIP 103989 / NBRC 15051 / NCIMB 9469 / D465).